The following is a 199-amino-acid chain: Fe/S biogenesis protein NfuA (199 aa).

Cys-156 and Cys-159 together coordinate [4Fe-4S] cluster.

Belongs to the NfuA family. In terms of assembly, homodimer. [4Fe-4S] cluster serves as cofactor.

Its function is as follows. Involved in iron-sulfur cluster biogenesis. Binds a 4Fe-4S cluster, can transfer this cluster to apoproteins, and thereby intervenes in the maturation of Fe/S proteins. Could also act as a scaffold/chaperone for damaged Fe/S proteins. This is Fe/S biogenesis protein NfuA from Haemophilus ducreyi (strain 35000HP / ATCC 700724).